We begin with the raw amino-acid sequence, 127 residues long: Small ribosomal subunit protein uS13 (127 aa).

The interval 96 to 127 (LPCHGQRTSTNARTRKGPKRTAVKKKGAAKKK) is disordered. Residues 108 to 127 (RTRKGPKRTAVKKKGAAKKK) are compositionally biased toward basic residues.

It belongs to the universal ribosomal protein uS13 family. Part of the 30S ribosomal subunit. Forms a loose heterodimer with protein S19. Forms two bridges to the 50S subunit in the 70S ribosome.

Located at the top of the head of the 30S subunit, it contacts several helices of the 16S rRNA. In the 70S ribosome it contacts the 23S rRNA (bridge B1a) and protein L5 of the 50S subunit (bridge B1b), connecting the 2 subunits; these bridges are implicated in subunit movement. Contacts the tRNAs in the A and P-sites. The protein is Small ribosomal subunit protein uS13 of Desulfosudis oleivorans (strain DSM 6200 / JCM 39069 / Hxd3) (Desulfococcus oleovorans).